Consider the following 234-residue polypeptide: Uridylate kinase (234 aa).

ATP-binding positions include 8 to 11 (KLSG), G51, and R55. UMP contacts are provided by residues D68 and 129 to 136 (TSNPFFTT). The ATP site is built by T156, Y162, and D165.

It belongs to the UMP kinase family. In terms of assembly, homohexamer.

The protein resides in the cytoplasm. The catalysed reaction is UMP + ATP = UDP + ADP. The protein operates within pyrimidine metabolism; CTP biosynthesis via de novo pathway; UDP from UMP (UMPK route): step 1/1. With respect to regulation, inhibited by UTP. Catalyzes the reversible phosphorylation of UMP to UDP. The protein is Uridylate kinase of Fervidobacterium nodosum (strain ATCC 35602 / DSM 5306 / Rt17-B1).